The following is a 253-amino-acid chain: Imidazole glycerol phosphate synthase subunit HisF (253 aa).

Catalysis depends on residues Asp11 and Asp130.

It belongs to the HisA/HisF family. In terms of assembly, heterodimer of HisH and HisF.

Its subcellular location is the cytoplasm. It carries out the reaction 5-[(5-phospho-1-deoxy-D-ribulos-1-ylimino)methylamino]-1-(5-phospho-beta-D-ribosyl)imidazole-4-carboxamide + L-glutamine = D-erythro-1-(imidazol-4-yl)glycerol 3-phosphate + 5-amino-1-(5-phospho-beta-D-ribosyl)imidazole-4-carboxamide + L-glutamate + H(+). It participates in amino-acid biosynthesis; L-histidine biosynthesis; L-histidine from 5-phospho-alpha-D-ribose 1-diphosphate: step 5/9. In terms of biological role, IGPS catalyzes the conversion of PRFAR and glutamine to IGP, AICAR and glutamate. The HisF subunit catalyzes the cyclization activity that produces IGP and AICAR from PRFAR using the ammonia provided by the HisH subunit. The chain is Imidazole glycerol phosphate synthase subunit HisF from Dinoroseobacter shibae (strain DSM 16493 / NCIMB 14021 / DFL 12).